The following is a 335-amino-acid chain: Glucokinase (335 aa).

ATP is bound at residue 11–16 (ADIGGT).

Belongs to the bacterial glucokinase family.

It localises to the cytoplasm. The catalysed reaction is D-glucose + ATP = D-glucose 6-phosphate + ADP + H(+). The polypeptide is Glucokinase (Xanthomonas campestris pv. campestris (strain B100)).